A 103-amino-acid chain; its full sequence is Cell division protein FtsB (103 aa).

At 1–3 (MGK) the chain is on the cytoplasmic side. The helical transmembrane segment at 4 to 21 (LTLLLLALLVWLQYSLWF) threads the bilayer. At 22–103 (GKNGIHDYSR…RAQTAGQNNR (82 aa)) the chain is on the periplasmic side. Residues 33-62 (NDDVVAQQATNAKLKARNDQLFAEIDDLNG) are a coiled coil.

Belongs to the FtsB family. As to quaternary structure, part of a complex composed of FtsB, FtsL and FtsQ.

It is found in the cell inner membrane. Its function is as follows. Essential cell division protein. May link together the upstream cell division proteins, which are predominantly cytoplasmic, with the downstream cell division proteins, which are predominantly periplasmic. The polypeptide is Cell division protein FtsB (Salmonella arizonae (strain ATCC BAA-731 / CDC346-86 / RSK2980)).